The primary structure comprises 941 residues: MKGSNRNKDHSAEGEGVGKRPKRKCLQWHPLLAKKLLDFSEEEEEEDEEEDIDKVQLLGADGLEQDVGETEDDESPEQRARRPMNAFLLFCKRHRSLVRQEHPRLDNRGATKILADWWAVLDPKEKQKYTDMAKEYKDAFMKANPGYKWCPTTNKPVKSPTPTVNPRKKLWAFPSDSSRDLPSPKKAKTEEMPQLNFGMADPTQMGGLSMLLLAGEHALGTPEVSSGTCRPDVSESPELRQKSPLFQFAEISSSTSHSDASTKQCQTSALFQFAEISSNTSQLGGAEPVKRCGKSALFQLAEMCLASEGMKMEESKLIKAKESDGGRIKELEKGKEEKEIKMEKTDETRLQKEAEFEKSAKENLRDSKELRNFEALQIDDIMAIKMEDPKEIRKEELEEDHKCSHFPDFSYSASSKIIISDVPSRKDHMCHPHGIMIIEDPAALNKPEKLKKKKKKSKMDRHGNDKSTPKKTCKKRQSSESDIESVIYTIEAVAKGDWGIEKLGDTPRKKVRTSSSGKGSILDAKPPKKKVKSREKKMSKEKSSDTTKESRPPDFISISASKNISGETPEGIKAEPLTPMEDALPPSLSGQAKPEDSDCHRKIETCGSRKSERSCKGALYKTLVSEGMLTSLRANVDRGKRSSGKGNSSDHEGCWNEESWTFSQSGTSGSKKFKKTKPKEDCLLGSAKLDEEFEKKFNSLPQYSPVTFDRKCVPVPRKKKKTGNVSSEPTKTSKGPFQSQKKNLFHKIVSKYKHKKEKPNVPEKGSGDKWSNKQLFLDAIHPTEAIFSEDRNTMEPVHKVKNIPSIFNTPEPTTTQEPLVGSQKRKARKTKITHLVRTADGRVSPAGGTLDDKPKEQLQRSLPKATETDCNDKCSHNTEVGETRSSTPEMPAVSAFFSLAALAEVAAMENVHRGQRSTPLTHDGQPKEMPQAPVLISCADQ.

The span at 1 to 18 (MKGSNRNKDHSAEGEGVG) shows a compositional bias: basic and acidic residues. Disordered regions lie at residues 1-21 (MKGSNRNKDHSAEGEGVGKRP), 39-80 (FSEE…EQRA), 157-200 (VKSP…FGMA), and 221-242 (TPEVSSGTCRPDVSESPELRQK). Acidic residues-rich tracts occupy residues 39–52 (FSEEEEEEDEEEDI) and 63–75 (LEQDVGETEDDES). The segment at residues 80–148 (ARRPMNAFLL…AFMKANPGYK (69 aa)) is a DNA-binding region (HMG box). Residues 177 to 191 (SSRDLPSPKKAKTEE) are compositionally biased toward basic and acidic residues. Serine 243 is modified (phosphoserine). Positions 326–370 (GRIKELEKGKEEKEIKMEKTDETRLQKEAEFEKSAKENLRDSKEL) form a coiled coil. Residue lysine 385 forms a Glycyl lysine isopeptide (Lys-Gly) (interchain with G-Cter in SUMO2) linkage. The segment at 438 to 482 (IEDPAALNKPEKLKKKKKKSKMDRHGNDKSTPKKTCKKRQSSESD) is disordered. A compositionally biased stretch (basic residues) spans 449 to 459 (KLKKKKKKSKM). Phosphoserine is present on residues serine 478 and serine 485. 2 stretches are compositionally biased toward basic and acidic residues: residues 499 to 508 (GIEKLGDTPR) and 536 to 552 (KKMSKEKSSDTTKESRP). 2 disordered regions span residues 499–600 (GIEK…SDCH) and 635–677 (NVDR…KKTK). A Glycyl lysine isopeptide (Lys-Gly) (interchain with G-Cter in SUMO2) cross-link involves residue lysine 573. A compositionally biased stretch (low complexity) spans 661-670 (TFSQSGTSGS). Lysine 696 participates in a covalent cross-link: Glycyl lysine isopeptide (Lys-Gly) (interchain with G-Cter in SUMO2). Serine 704 carries the phosphoserine modification. 3 disordered regions span residues 714–771 (PVPR…DKWS), 803–888 (IPSI…SSTP), and 912–941 (HRGQRSTPLTHDGQPKEMPQAPVLISCADQ). Residues 723–742 (GNVSSEPTKTSKGPFQSQKK) are compositionally biased toward polar residues. Positions 743 to 757 (NLFHKIVSKYKHKKE) are enriched in basic residues. The segment covering 758–771 (KPNVPEKGSGDKWS) has biased composition (basic and acidic residues). The segment covering 805 to 817 (SIFNTPEPTTTQE) has biased composition (polar residues). At serine 822 the chain carries Phosphoserine. Over residues 823–834 (QKRKARKTKITH) the composition is skewed to basic residues. A Phosphoserine modification is found at serine 844. A compositionally biased stretch (basic and acidic residues) spans 866 to 882 (TETDCNDKCSHNTEVGE).

Its subcellular location is the nucleus. Its function is as follows. Transcription factor that is necessary for cell cycle progression from G1 to S phase. The polypeptide is HMG box transcription factor BBX (BBX) (Homo sapiens (Human)).